The primary structure comprises 300 residues: Pantoate--beta-alanine ligase (300 aa).

Position 43–50 (43–50) interacts with ATP; the sequence is MGYLHSGH. The active-site Proton donor is His50. Gln74 provides a ligand contact to (R)-pantoate. Gln74 is a binding site for beta-alanine. An ATP-binding site is contributed by 162-165; the sequence is GQKD. Gln168 provides a ligand contact to (R)-pantoate. ATP contacts are provided by residues Ile191 and 199–202; that span reads KSSR.

This sequence belongs to the pantothenate synthetase family. Homodimer.

It is found in the cytoplasm. It carries out the reaction (R)-pantoate + beta-alanine + ATP = (R)-pantothenate + AMP + diphosphate + H(+). It participates in cofactor biosynthesis; (R)-pantothenate biosynthesis; (R)-pantothenate from (R)-pantoate and beta-alanine: step 1/1. In terms of biological role, catalyzes the condensation of pantoate with beta-alanine in an ATP-dependent reaction via a pantoyl-adenylate intermediate. This chain is Pantoate--beta-alanine ligase (panC), found in Dictyostelium discoideum (Social amoeba).